A 158-amino-acid chain; its full sequence is Fibroblast growth factor 2 (158 aa).

The propeptide occupies 1 to 12 (MAAGAAGSITTL). Residue N39 participates in heparin binding. The tract at residues 131–147 (KRTGQYKPGPKTGPGQK) is heparin-binding.

This sequence belongs to the heparin-binding growth factors family.

Its subcellular location is the secreted. The protein resides in the nucleus. In terms of biological role, acts as a ligand for FGFR1, FGFR2, FGFR3 and FGFR4. Also acts as an integrin ligand which is required for FGF2 signaling. Plays an important role in the regulation of cell survival, cell division, cell differentiation and cell migration. Functions as a potent mitogen in vitro. Can induce angiogenesis. This chain is Fibroblast growth factor 2 (FGF2), found in Gallus gallus (Chicken).